A 458-amino-acid chain; its full sequence is tRNA modification GTPase MnmE (458 aa).

R26, E88, and R127 together coordinate (6S)-5-formyl-5,6,7,8-tetrahydrofolate. Residues 224–378 (GLSTAIIGRP…IEERINDIFF (155 aa)) form the TrmE-type G domain. N234 contacts K(+). GTP is bound by residues 234-239 (NVGKSS), 253-259 (TDIEGTT), and 278-281 (DTAG). S238 is a Mg(2+) binding site. Residues T253, I255, and T258 each coordinate K(+). T259 provides a ligand contact to Mg(2+). K458 is a (6S)-5-formyl-5,6,7,8-tetrahydrofolate binding site.

Belongs to the TRAFAC class TrmE-Era-EngA-EngB-Septin-like GTPase superfamily. TrmE GTPase family. Homodimer. Heterotetramer of two MnmE and two MnmG subunits. The cofactor is K(+).

The protein resides in the cytoplasm. In terms of biological role, exhibits a very high intrinsic GTPase hydrolysis rate. Involved in the addition of a carboxymethylaminomethyl (cmnm) group at the wobble position (U34) of certain tRNAs, forming tRNA-cmnm(5)s(2)U34. This Streptococcus agalactiae serotype Ia (strain ATCC 27591 / A909 / CDC SS700) protein is tRNA modification GTPase MnmE.